Reading from the N-terminus, the 61-residue chain is Protein translocase subunit SecE (61 aa).

The helical transmembrane segment at 38–58 (GIGMILIGLIGLVIRMIGYLI) threads the bilayer.

This sequence belongs to the SecE/SEC61-gamma family. In terms of assembly, component of the Sec protein translocase complex. Heterotrimer consisting of SecY (alpha), SecG (beta) and SecE (gamma) subunits. The heterotrimers can form oligomers, although 1 heterotrimer is thought to be able to translocate proteins. Interacts with the ribosome. May interact with SecDF, and other proteins may be involved.

It is found in the cell membrane. Its function is as follows. Essential subunit of the Sec protein translocation channel SecYEG. Clamps together the 2 halves of SecY. May contact the channel plug during translocation. This chain is Protein translocase subunit SecE, found in Thermococcus onnurineus (strain NA1).